We begin with the raw amino-acid sequence, 509 residues long: Transmembrane protein 180 (509 aa).

The Extracellular segment spans residues 1-10; it reads MGLRLLACLF. Residues 11-42 traverse the membrane as a helical segment; it reads HLPTAVIYGSLSLFVSILHNVFLLYYVDTFVS. Over 43–54 the chain is Cytoplasmic; it reads VYKIDKLSFWIG. A helical membrane pass occupies residues 55–73; it reads ETVFLIWNSLNDPLFGWLS. The Extracellular portion of the chain corresponds to 74-98; that stretch reads DRVFLSTQQPGAEISSPEVVLKRLR. Residues 99 to 116 traverse the membrane as a helical segment; sequence ALSHNGPLFAISFLAFWV. At 117-124 the chain is on the cytoplasmic side; it reads AWAHPGLQ. The chain crosses the membrane as a helical span at residues 125-149; that stretch reads FLLCLCMYDSFLTMVDLHHNALLAD. Topologically, residues 150-153 are extracellular; the sequence is LAVS. Residues 154–177 form a helical membrane-spanning segment; that stretch reads AKDRTSLNFYCSFFSAIGSLSVFM. Residues 178 to 189 lie on the Cytoplasmic side of the membrane; that stretch reads SYAVWNKEDFFS. A helical transmembrane segment spans residues 190-221; sequence FRIFCIVLAFCSIVGFTLSTQLLRQRFETDGK. The Extracellular segment spans residues 222–259; it reads AKWDQESTLKELYIEKLSVPQEKRITLVEYLQQLSRHR. Residues 260 to 287 traverse the membrane as a helical segment; the sequence is NFLWFVCMNLIQVFHCHFNSNFFPLFLE. Residues 288-300 are Cytoplasmic-facing; the sequence is HLLSDKISVSTGS. The helical transmembrane segment at 301–320 threads the bilayer; it reads FLLGISYIAPHLNNLYFLSL. At 321–325 the chain is on the extracellular side; that stretch reads CRRWG. Residues 326–345 form a helical membrane-spanning segment; sequence VYAVVRGLFFLKLALSVVML. The Cytoplasmic portion of the chain corresponds to 346–353; it reads LAGPDQVY. A helical membrane pass occupies residues 354–388; it reads LLCIFIASNRVFTEGTCKLLNLVVTDLVDEDLVLN. Over 389–397 the chain is Extracellular; it reads RRKQAASAL. Residues 398 to 424 form a helical membrane-spanning segment; it reads LFGMVALVTKPGQTFAPLIGTWLLCVY. The Cytoplasmic portion of the chain corresponds to 425–458; sequence TGYDIFQRNPLSNVVSAQPKLESDTILEPTLRQG. Residues 459-477 form a helical membrane-spanning segment; that stretch reads CFYLLVFVPITCALLQLLS. Topologically, residues 478 to 509 are extracellular; it reads WTQFSLHGKRLQMVKAQRQGLMQGRAPEIKMI.

The protein localises to the cell membrane. The chain is Transmembrane protein 180 from Gallus gallus (Chicken).